The chain runs to 413 residues: CinA-like protein (413 aa).

Belongs to the CinA family.

The sequence is that of CinA-like protein from Geotalea daltonii (strain DSM 22248 / JCM 15807 / FRC-32) (Geobacter daltonii).